The sequence spans 129 residues: Large ribosomal subunit protein bL17 (129 aa).

The protein belongs to the bacterial ribosomal protein bL17 family. As to quaternary structure, part of the 50S ribosomal subunit. Contacts protein L32.

The chain is Large ribosomal subunit protein bL17 from Actinobacillus succinogenes (strain ATCC 55618 / DSM 22257 / CCUG 43843 / 130Z).